A 507-amino-acid chain; its full sequence is METIRADEISNIIRERIEQYTREVKIVNTGTVLQVGDGIARIYGLDEVMAGELVEFEEGTIGIALNLESNNVGVVLMGDGLLIQEGSSVKATGRIAQIPVSEAYLGRVINALAKPIDGRGEISSSDSRLIESPAPGIILRRSVYEPLQTGLIAIDSMIPIGRGQRELIIGDRQTGKTAVATDTILNQQGQNVICVYVAIGQKASSVAQVVSTLQERGAMEYTIIVAETADSPATLQYLAPYTGAALAEYFMYRKQHTSIIYDDPSKQAQAYRQMSLLLRRPPGREAYPGDVFYLHSRLLERAAKLSSALGEGSMTALPIVETQSGDVSAYIPTNVISITDGQIFLSADLFNAGIRPAINVGISVSRVGSAAQIKAMKQVAGKLKLELAQFAELEAFAQFASDLDKATQNQLARGQRLRELLKQSQSAPLTVDEQIMTVYTGTNGYLDSLEIAQVRKFLVELRTYVKTNKPQFQEIISSTKTFTPEAEVLLKEAIQEQMERFLLQDQV.

170-177 (GDRQTGKT) lines the ATP pocket.

This sequence belongs to the ATPase alpha/beta chains family. F-type ATPases have 2 components, CF(1) - the catalytic core - and CF(0) - the membrane proton channel. CF(1) has five subunits: alpha(3), beta(3), gamma(1), delta(1), epsilon(1). CF(0) has four main subunits: a, b, b' and c.

The protein localises to the plastid. It is found in the chloroplast thylakoid membrane. It catalyses the reaction ATP + H2O + 4 H(+)(in) = ADP + phosphate + 5 H(+)(out). Its function is as follows. Produces ATP from ADP in the presence of a proton gradient across the membrane. The alpha chain is a regulatory subunit. This is ATP synthase subunit alpha, chloroplastic from Cucumis sativus (Cucumber).